The chain runs to 445 residues: Maltoporin 2 (445 aa).

Positions 1–25 (MKMKAKWLPIAAAVTAALASQAAFA) are cleaved as a signal peptide.

It belongs to the porin LamB (TC 1.B.3) family. In terms of assembly, homotrimer formed of three 18-stranded antiparallel beta-barrels, containing three independent channels.

Its subcellular location is the cell outer membrane. The enzyme catalyses beta-maltose(in) = beta-maltose(out). Involved in the transport of maltose and maltodextrins. This is Maltoporin 2 from Aeromonas salmonicida (strain A449).